A 182-amino-acid polypeptide reads, in one-letter code: UPF0397 protein SPP_0507 (182 aa).

5 helical membrane-spanning segments follow: residues 10–30, 46–66, 73–93, 109–129, and 148–168; these read VVAV…NIPT, LLSI…GHAI, YGLW…VGLF, ILIF…VLAP, and IVAG…LLLA.

The protein belongs to the UPF0397 family.

The protein localises to the cell membrane. The polypeptide is UPF0397 protein SPP_0507 (Streptococcus pneumoniae (strain P1031)).